The chain runs to 66 residues: FMRFamide-like neuropeptides 24 (66 aa).

The first 22 residues, 1–22 (MSRTSIILVLAIFVAIAAIAQC), serve as a signal peptide directing secretion. A propeptide spanning residues 23–48 (RNIQYDVDEISPEAAFRYAQWGEIPH) is cleaved from the precursor. A Phenylalanine amide modification is found at Phe61. A propeptide spanning residues 65 to 66 (SV) is cleaved from the precursor.

This sequence belongs to the FARP (FMRFamide related peptide) family.

The protein localises to the secreted. Functionally, FMRFamides and FMRFamide-like peptides are neuropeptides. The chain is FMRFamide-like neuropeptides 24 from Caenorhabditis briggsae.